A 356-amino-acid polypeptide reads, in one-letter code: Glutamine synthetase PR-2 (356 aa).

The GS beta-grasp domain occupies 19–99; the sequence is IIAEYIWVGG…VICDVYTPAG (81 aa). The disordered stretch occupies residues 37 to 66; the sequence is ARTLPGPVDDPAKLPKWNYDGSSTDQAPGD. The GS catalytic domain maps to 106 to 356; sequence KRYDAAKIFS…IAETTILWKP (251 aa).

This sequence belongs to the glutamine synthetase family. Homooctamer. In terms of tissue distribution, roots.

It is found in the cytoplasm. The enzyme catalyses L-glutamate + NH4(+) + ATP = L-glutamine + ADP + phosphate + H(+). The polypeptide is Glutamine synthetase PR-2 (Phaseolus vulgaris (Kidney bean)).